The chain runs to 292 residues: 4-hydroxybenzoate octaprenyltransferase (292 aa).

9 helical membrane passes run 24-44, 47-67, 97-117, 119-139, 145-165, 171-191, 214-234, 238-258, and 270-290; these read IGTLLLLWPTYWALWLANAGM, LTNFIVFTLGVVIMRSAGCVI, AISLFILLITVAFLLVLMLSV, TILLSFGALALAFCYPFMKRY, VVLGAAFGWAIPMAFMASINA, WLLFIANICWTVAYDTMYAMV, HIIGLLNLAFIALMLSIGALN, LSYWLGLSVAIVLLVYQQVLI, and FLNNHYVGLAFFIGLLFSYPV.

This sequence belongs to the UbiA prenyltransferase family. The cofactor is Mg(2+).

Its subcellular location is the cell inner membrane. The enzyme catalyses all-trans-octaprenyl diphosphate + 4-hydroxybenzoate = 4-hydroxy-3-(all-trans-octaprenyl)benzoate + diphosphate. The protein operates within cofactor biosynthesis; ubiquinone biosynthesis. Functionally, catalyzes the prenylation of para-hydroxybenzoate (PHB) with an all-trans polyprenyl group. Mediates the second step in the final reaction sequence of ubiquinone-8 (UQ-8) biosynthesis, which is the condensation of the polyisoprenoid side chain with PHB, generating the first membrane-bound Q intermediate 3-octaprenyl-4-hydroxybenzoate. The sequence is that of 4-hydroxybenzoate octaprenyltransferase from Pseudoalteromonas translucida (strain TAC 125).